The following is a 168-amino-acid chain: MAQLLTPLESILAIIPALAANGAPVLLKYHGTPIDGGKRFLDGRPVLGPGKTWEGLATGILYGSVIALLAASATCNPKLYAAGVFASIGAMLGDMLGAFIKRRLGLERGAPAPLLDQLDFYSGALLALYAAGYVVHPAVALTFTPIVIALHRLTNMAANRLRLKPVPW.

Transmembrane regions (helical) follow at residues 7–27, 55–75, 80–100, 109–129, and 130–150; these read PLES…PVLL, GLAT…SATC, YAAG…GAFI, GAPA…LALY, and AAGY…VIAL.

This sequence belongs to the CDP-archaeol synthase family. Mg(2+) is required as a cofactor.

Its subcellular location is the cell membrane. The enzyme catalyses 2,3-bis-O-(geranylgeranyl)-sn-glycerol 1-phosphate + CTP + H(+) = CDP-2,3-bis-O-(geranylgeranyl)-sn-glycerol + diphosphate. It participates in membrane lipid metabolism; glycerophospholipid metabolism. Functionally, catalyzes the formation of CDP-2,3-bis-(O-geranylgeranyl)-sn-glycerol (CDP-archaeol) from 2,3-bis-(O-geranylgeranyl)-sn-glycerol 1-phosphate (DGGGP) and CTP. This reaction is the third ether-bond-formation step in the biosynthesis of archaeal membrane lipids. The sequence is that of CDP-archaeol synthase from Hyperthermus butylicus (strain DSM 5456 / JCM 9403 / PLM1-5).